Consider the following 130-residue polypeptide: Small ribosomal subunit protein uS8 (130 aa).

It belongs to the universal ribosomal protein uS8 family. As to quaternary structure, part of the 30S ribosomal subunit. Contacts proteins S5 and S12.

In terms of biological role, one of the primary rRNA binding proteins, it binds directly to 16S rRNA central domain where it helps coordinate assembly of the platform of the 30S subunit. The polypeptide is Small ribosomal subunit protein uS8 (Tolumonas auensis (strain DSM 9187 / NBRC 110442 / TA 4)).